Consider the following 341-residue polypeptide: D-erythrose-4-phosphate dehydrogenase (341 aa).

12-13 (RI) serves as a coordination point for NAD(+). Residues 154 to 156 (SCT), Arg-200, 213 to 214 (TK), and Arg-236 each bind substrate. Cys-155 serves as the catalytic Nucleophile. NAD(+) is bound at residue Asn-318.

The protein belongs to the glyceraldehyde-3-phosphate dehydrogenase family. Epd subfamily. As to quaternary structure, homotetramer.

The protein localises to the cytoplasm. The enzyme catalyses D-erythrose 4-phosphate + NAD(+) + H2O = 4-phospho-D-erythronate + NADH + 2 H(+). It participates in cofactor biosynthesis; pyridoxine 5'-phosphate biosynthesis; pyridoxine 5'-phosphate from D-erythrose 4-phosphate: step 1/5. Functionally, catalyzes the NAD-dependent conversion of D-erythrose 4-phosphate to 4-phosphoerythronate. In Edwardsiella ictaluri (strain 93-146), this protein is D-erythrose-4-phosphate dehydrogenase.